We begin with the raw amino-acid sequence, 333 residues long: Ribosomal RNA small subunit methyltransferase C (333 aa).

The protein belongs to the methyltransferase superfamily. RsmC family. Monomer.

It is found in the cytoplasm. It catalyses the reaction guanosine(1207) in 16S rRNA + S-adenosyl-L-methionine = N(2)-methylguanosine(1207) in 16S rRNA + S-adenosyl-L-homocysteine + H(+). Functionally, specifically methylates the guanine in position 1207 of 16S rRNA in the 30S particle. The polypeptide is Ribosomal RNA small subunit methyltransferase C (Mannheimia succiniciproducens (strain KCTC 0769BP / MBEL55E)).